Here is a 480-residue protein sequence, read N- to C-terminus: MEKWWFNSMLSNEELEHKCGLSKSADSLGPIGNASGSETPIINGIDKNIHSWSDNGSYSCSNVDHLFGVRDIWSFISDDTFLVRDSNGDSYSVYFDIENQIFEIHNDSYFLSELESAFSSYLNKRSFSSYLNSGPKSYNRNYDRYMYDTQYSWNNHINSCIDSYLHSEISIDSDIYSYICSESLSGSDSESSSIRTSINGSDFDINTKYGRLWVQCENCYGLNYQKFFRSKMNICERCGYYLKMSSSDRIELSIDPGTWDPMDEDMISMDPIEFHSEEEPYRDRIDFFQRTTGLTEAVQTGIGQLNGIPIAIGVMDFQFMGGSMGSVVGEKITRLIECATNRSLPVIIVCASGGARMQEGSLSLMQMAKISSALYNYQSNKKLFYVSILTSPTTGGVTASFGMLGDIIIAEPNAYIAFAGKRVIEQTLKKTIPEGSQAAEYLFHKGLFDLIVPRNPLKGVPSELFQLHGFFPLNQINKYK.

The CoA carboxyltransferase N-terminal domain maps to 212–480 (LWVQCENCYG…FPLNQINKYK (269 aa)). Zn(2+) is bound by residues C216, C219, C235, and C238. Residues 216 to 238 (CENCYGLNYQKFFRSKMNICERC) form a C4-type zinc finger.

This sequence belongs to the AccD/PCCB family. Acetyl-CoA carboxylase is a heterohexamer composed of biotin carboxyl carrier protein, biotin carboxylase and 2 subunits each of ACCase subunit alpha and ACCase plastid-coded subunit beta (accD). Requires Zn(2+) as cofactor.

The protein resides in the plastid. Its subcellular location is the chloroplast stroma. It carries out the reaction N(6)-carboxybiotinyl-L-lysyl-[protein] + acetyl-CoA = N(6)-biotinyl-L-lysyl-[protein] + malonyl-CoA. It functions in the pathway lipid metabolism; malonyl-CoA biosynthesis; malonyl-CoA from acetyl-CoA: step 1/1. In terms of biological role, component of the acetyl coenzyme A carboxylase (ACC) complex. Biotin carboxylase (BC) catalyzes the carboxylation of biotin on its carrier protein (BCCP) and then the CO(2) group is transferred by the transcarboxylase to acetyl-CoA to form malonyl-CoA. In Illicium oligandrum (Star anise), this protein is Acetyl-coenzyme A carboxylase carboxyl transferase subunit beta, chloroplastic.